The following is a 1442-amino-acid chain: Protein patched homolog 1 (1442 aa).

Residues 1-45 (MASAADALEPESGSSTAGGGSHPVRAARSARGRRRRSGGTRRAAA) form a disordered region. The Cytoplasmic portion of the chain corresponds to 1 to 101 (MASAADALEP…GCYIQKNCGK (101 aa)). Residues 28–39 (RSARGRRRRSGG) are compositionally biased toward basic residues. A helical membrane pass occupies residues 102 to 122 (FLVVGLLYSAFAVGLRAANLE). Over 123–436 (TNVEELWVEV…LDDILKSFSD (314 aa)) the chain is Extracellular. N-linked (GlcNAc...) asparagine glycans are attached at residues N141, N312, N349, and N414. The helical transmembrane segment at 437–457 (VSVIRVASGYLLMLAYACLTM) threads the bilayer. Residues 438–598 (SVIRVASGYL…LLIFPAILSM (161 aa)) enclose the SSD domain. Topologically, residues 458–472 (LRWDCAKSQGAVGLA) are cytoplasmic. Residues 473-493 (GVLLVALSVAAGLGLCSLIGI) form a helical membrane-spanning segment. Residues 494 to 501 (SFNAATTQ) lie on the Extracellular side of the membrane. Residues 502–522 (VLPFLALGVGVDDVFLLAHAF) traverse the membrane as a helical segment. Residues 523-547 (SETGQNKRIPFEDRTGECLKRTGAS) lie on the Cytoplasmic side of the membrane. Residues 548-568 (VALTSISNVTAFFMAALIPIP) form a helical membrane-spanning segment. Residues 569–577 (ALRAFSLQA) are Extracellular-facing. The chain crosses the membrane as a helical span at residues 578–598 (AVVVVFNFAMVLLIFPAILSM). The Cytoplasmic portion of the chain corresponds to 599–747 (DLYRREDRRL…HYAPFLLKPK (149 aa)). Residues 748–768 (AKVVVIFLFLGLLGLSLYGTT) form a helical membrane-spanning segment. The Extracellular portion of the chain corresponds to 769 to 1026 (RVRDGLDLTD…WEQYIGLRHW (258 aa)). N-linked (GlcNAc...) asparagine glycans are attached at residues N827, N874, and N999. A helical membrane pass occupies residues 1027–1047 (LLLSISVVLACTFLVCALFLL). Residues 1048–1053 (NPWTAG) lie on the Cytoplasmic side of the membrane. Residues 1054–1074 (IIVVVLALMTVELFGMMGLIG) traverse the membrane as a helical segment. The Extracellular segment spans residues 1075–1082 (IKLSAVPV). A helical membrane pass occupies residues 1083 to 1101 (VILIASVGIGVEFTVHIAL). Topologically, residues 1102-1120 (AFLTAIGDKNRRAVLALEH) are cytoplasmic. Residues 1121–1141 (MFAPVLDGAVSTLLGVLMLAG) form a helical membrane-spanning segment. The Extracellular segment spans residues 1142-1153 (SEFDFIVRYFFA). The helical transmembrane segment at 1154 to 1174 (VLAILTILGVLNGLVLLPVLL) threads the bilayer. At 1175–1442 (SFFGPYPEVS…EERTAGKISE (268 aa)) the chain is on the cytoplasmic side. Disordered stretches follow at residues 1188 to 1231 (GRNR…TTVS) and 1266 to 1338 (STVV…LNHK). Residues 1217 to 1226 (SDSSDSEYSS) are compositionally biased toward low complexity. The segment covering 1276–1293 (QSSPRLQSNPEAGTQQVW) has biased composition (polar residues).

The protein belongs to the patched family. Glycosylation is necessary for SHH binding. Expression is seen in the embryonic neural tube, sclerotome, visceral mesoderm, and limb bud.

The protein localises to the membrane. Acts as a receptor for sonic hedgehog (SHH), indian hedgehog (IHH) and desert hedgehog (DHH). Associates with the smoothened protein (SMO) to transduce the hedgehog's proteins signal. The chain is Protein patched homolog 1 (PTCH1) from Gallus gallus (Chicken).